A 193-amino-acid chain; its full sequence is Zinc finger protein 740 (193 aa).

The interval 33-75 (SKQAENGERAGSPDVLRCSSQGHRKDSDKSRSRKDDDSLSEAS) is disordered. Residue Lys34 forms a Glycyl lysine isopeptide (Lys-Gly) (interchain with G-Cter in SUMO2) linkage. Phosphoserine is present on Ser44. Over residues 55-69 (HRKDSDKSRSRKDDD) the composition is skewed to basic and acidic residues. 2 consecutive C2H2-type zinc fingers follow at residues 101–123 (FVCEHCFGAFRSSYHLKRHILIH) and 129–151 (FECDICDMRFIQKYHLERHKRVH). The C2H2-type 3; atypical zinc-finger motif lies at 157–179 (YQCERCHQCFSRTDRLLRHKRMC).

The protein belongs to the krueppel C2H2-type zinc-finger protein family.

Its subcellular location is the nucleus. In terms of biological role, may be involved in transcriptional regulation. The polypeptide is Zinc finger protein 740 (ZNF740) (Homo sapiens (Human)).